We begin with the raw amino-acid sequence, 444 residues long: Gustatory receptor 5a for trehalose (444 aa).

The Cytoplasmic portion of the chain corresponds to 1-56 (MRQLKGRNRCNRAVRHLKIQGKMWLKNLKSGLEQIRESQVRGTRKNFLHDGSFHEA). A helical membrane pass occupies residues 57 to 77 (VAPVLAVAQCFCLMPVCGISA). The Extracellular portion of the chain corresponds to 78-178 (PTYRGLSFNR…RARPARRLKL (101 aa)). The chain crosses the membrane as a helical span at residues 179–199 (VAFVLLVVSLMEHLLSIISVV). Residues 200–214 (YYDFCPRRSDPVESY) lie on the Cytoplasmic side of the membrane. Residues 215–235 (LLGASAQLFEVFPYSNWLAWL) traverse the membrane as a helical segment. The Extracellular portion of the chain corresponds to 236-240 (GKIQN). A helical transmembrane segment spans residues 241 to 261 (VLLTFGWSYMDIFLMMLGMGL). Residues 262-305 (SEMLARLNRSLEQQVRQPMPEAYWTWSRTLYRSIVELIREVDDA) are Cytoplasmic-facing. A helical membrane pass occupies residues 306 to 326 (VSGIMLISFGSNLYFICLQLL). Over 327–338 (KSINTMPSSAHA) the chain is Extracellular. The chain crosses the membrane as a helical span at residues 339 to 359 (VYFYFSLLFLLSRSTAVLLFV). The Cytoplasmic portion of the chain corresponds to 360–410 (SAINDQAREPLRLLRLVPLKGYHPEVFRFAAELASDQVALTGLKFFNVTRK). A helical membrane pass occupies residues 411–431 (LFLAMAGTVATYELVLIQFHE). Residues 432–444 (DKKTWDCSPFNLD) lie on the Extracellular side of the membrane.

Belongs to the insect chemoreceptor superfamily. Gustatory receptor (GR) family. Gr5a subfamily. In terms of tissue distribution, expressed in labellar chemosensory neurons.

It is found in the cell membrane. Its function is as follows. Gustatory receptor required for response to the sugar trehalose in taste neurons. Gr5a neurons selectively respond to sugars, in contrast to Gr66a cells which respond to bitter compounds. Flies are attracted to sugars and avoid bitter substances, suggesting that Gr5a neuron activity is sufficient to mediate acceptance behavior. Sugar signal transduction occurs through coupling with G-proteins such as Galpha49B and G-salpha60A. The protein is Gustatory receptor 5a for trehalose (Gr5a) of Drosophila melanogaster (Fruit fly).